The following is a 103-amino-acid chain: Large ribosomal subunit protein bL21 (103 aa).

It belongs to the bacterial ribosomal protein bL21 family. As to quaternary structure, part of the 50S ribosomal subunit. Contacts protein L20.

This protein binds to 23S rRNA in the presence of protein L20. The polypeptide is Large ribosomal subunit protein bL21 (Laribacter hongkongensis (strain HLHK9)).